The following is a 92-amino-acid chain: Small ribosomal subunit protein uS19 (92 aa).

The protein belongs to the universal ribosomal protein uS19 family.

Functionally, protein S19 forms a complex with S13 that binds strongly to the 16S ribosomal RNA. In Rhodospirillum centenum (strain ATCC 51521 / SW), this protein is Small ribosomal subunit protein uS19.